The following is a 367-amino-acid chain: WAT1-related protein At3g28050 (367 aa).

The next 10 membrane-spanning stretches (helical) occupy residues 10 to 30 (VLPV…NTLF), 40 to 60 (FHVF…PSLF), 73 to 93 (FSIL…NIMG), 103 to 123 (TLAS…AVVF), 142 to 162 (TVVS…VVIA), 179 to 199 (WILG…WYIV), 211 to 231 (FTVV…VTLF), 246 to 266 (IALV…NTIH), 276 to 296 (LFVA…GVIF), and 301 to 321 (LYIG…TVMW). EamA domains lie at 25–153 (GLNT…FIVT) and 195–319 (LWYI…FYTV). A disordered region spans residues 338 to 367 (HEEANEADLDSPSGSQKAPLLESYKNDEHV).

It belongs to the drug/metabolite transporter (DMT) superfamily. Plant drug/metabolite exporter (P-DME) (TC 2.A.7.4) family.

It localises to the membrane. The sequence is that of WAT1-related protein At3g28050 from Arabidopsis thaliana (Mouse-ear cress).